The chain runs to 265 residues: Anamorsin homolog 1 (265 aa).

Residues 1 to 143 are N-terminal SAM-like domain; it reads MAATVAEALA…KVSWSLGSSF (143 aa). The segment at 144-175 is linker; it reads PLKKATKGLPKIQIDDDSELIDEDSLLTEDDL. Positions 186, 195, 198, and 200 each coordinate [2Fe-2S] cluster. The tract at residues 186 to 200 is fe-S binding site A; it reads CEVGATRKACKNCTC. [4Fe-4S] cluster contacts are provided by cysteine 226, cysteine 229, cysteine 237, and cysteine 240. 2 short sequence motifs (cx2C motif) span residues 226–229 and 237–240; these read CGNC and CGTC. The segment at 226–240 is fe-S binding site B; the sequence is CGNCGLGDAFRCGTC.

This sequence belongs to the anamorsin family. Monomer. [2Fe-2S] cluster is required as a cofactor. The cofactor is [4Fe-4S] cluster.

Its subcellular location is the cytoplasm. The protein localises to the mitochondrion intermembrane space. Functionally, component of the cytosolic iron-sulfur (Fe-S) protein assembly (CIA) machinery. Required for the maturation of extramitochondrial Fe-S proteins. Part of an electron transfer chain functioning in an early step of cytosolic Fe-S biogenesis, facilitating the de novo assembly of a [4Fe-4S] cluster on the cytosolic Fe-S scaffold complex. Electrons are transferred from NADPH via a FAD- and FMN-containing diflavin oxidoreductase. Together with the diflavin oxidoreductase, also required for the assembly of the diferric tyrosyl radical cofactor of ribonucleotide reductase (RNR), probably by providing electrons for reduction during radical cofactor maturation in the catalytic small subunit. This Oryza sativa subsp. japonica (Rice) protein is Anamorsin homolog 1.